Here is a 511-residue protein sequence, read N- to C-terminus: Coatomer subunit delta (511 aa).

The segment covering 168–177 (QARRDAERQG) has biased composition (basic and acidic residues). The interval 168 to 188 (QARRDAERQGKKAPGFGGFGS) is disordered. Phosphoserine is present on Ser-223. N6-acetyllysine occurs at positions 233 and 241. Ser-244 is modified (phosphoserine). The 241-residue stretch at 271–511 (MESVHMKIEE…TFLVDKYEIL (241 aa)) folds into the MHD domain. 2 positions are modified to N6-acetyllysine: Lys-309 and Lys-351. The residue at position 493 (Ser-493) is a Phosphoserine.

This sequence belongs to the adaptor complexes medium subunit family. Delta-COP subfamily. Oligomeric complex that consists of at least the alpha, beta, beta', gamma, delta, epsilon and zeta subunits.

It is found in the cytoplasm. The protein localises to the golgi apparatus membrane. It localises to the cytoplasmic vesicle. The protein resides in the COPI-coated vesicle membrane. The coatomer is a cytosolic protein complex that binds to dilysine motifs and reversibly associates with Golgi non-clathrin-coated vesicles, which further mediate biosynthetic protein transport from the ER, via the Golgi up to the trans Golgi network. Coatomer complex is required for budding from Golgi membranes, and is essential for the retrograde Golgi-to-ER transport of dilysine-tagged proteins. In mammals, the coatomer can only be recruited by membranes associated to ADP-ribosylation factors (ARFs), which are small GTP-binding proteins; the complex also influences the Golgi structural integrity, as well as the processing, activity, and endocytic recycling of LDL receptors. This is Coatomer subunit delta (Arcn1) from Rattus norvegicus (Rat).